We begin with the raw amino-acid sequence, 301 residues long: Probable alpha-L-glutamate ligase (301 aa).

Residues 104 to 287 (LQLLSRKGIG…VAGIIIEYLE (184 aa)) enclose the ATP-grasp domain. ATP contacts are provided by residues K141, 178–179 (EY), D187, and 211–213 (RSN). Mg(2+)-binding residues include D248, E260, and N262. Mn(2+) is bound by residues D248, E260, and N262.

The protein belongs to the RimK family. Requires Mg(2+) as cofactor. It depends on Mn(2+) as a cofactor.

The sequence is that of Probable alpha-L-glutamate ligase from Azotobacter vinelandii (strain DJ / ATCC BAA-1303).